The following is a 253-amino-acid chain: 5'/3'-nucleotidase SurE (253 aa).

Residues Asp8, Asp9, Ser39, and Asn92 each coordinate a divalent metal cation.

The protein belongs to the SurE nucleotidase family. The cofactor is a divalent metal cation.

Its subcellular location is the cytoplasm. It catalyses the reaction a ribonucleoside 5'-phosphate + H2O = a ribonucleoside + phosphate. The catalysed reaction is a ribonucleoside 3'-phosphate + H2O = a ribonucleoside + phosphate. It carries out the reaction [phosphate](n) + H2O = [phosphate](n-1) + phosphate + H(+). Nucleotidase with a broad substrate specificity as it can dephosphorylate various ribo- and deoxyribonucleoside 5'-monophosphates and ribonucleoside 3'-monophosphates with highest affinity to 3'-AMP. Also hydrolyzes polyphosphate (exopolyphosphatase activity) with the preference for short-chain-length substrates (P20-25). Might be involved in the regulation of dNTP and NTP pools, and in the turnover of 3'-mononucleotides produced by numerous intracellular RNases (T1, T2, and F) during the degradation of various RNAs. In Cronobacter sakazakii (strain ATCC BAA-894) (Enterobacter sakazakii), this protein is 5'/3'-nucleotidase SurE.